The sequence spans 515 residues: MSTIAAFYGGKSILITGATGFLGKVLMEKLFRTSPDLKVIYILVRPKAGQTLQQRVFQILDSKLFEKVKEVCPNVHEKIRAIYADLNQNDFAISKEDMQELLSCTNIIFHCAATVRFDDTLRHAVQLNVTATRQLLLMASQMPKLEAFIHISTAYSNCNLKHIDEVIYPCPVEPKKIIDSLEWLDDAIIDEITPKLIRDWPNIYTYTKALGEMVVQQESRNLNIAIIRPSIVGATWQEPFPGWVDNINGPNGIIIATGKGFLRAIKATPMAVADVIPVDTVVNLMLAVGWYTAVHRPKSTLVYHITSGNMNPCNWHKMGVQVLATFEKIPFERPFRRPNANFTSNSFTSQYWNAVSHRAPAIIYDCYLRLTGRKPRMTKLMNRLLRTVSMLEYFINRSWEWSTYNTEMLMSELSPEDQRVFNFDVRQLNWLEYIENYVLGVKKYLLKEDMAGIPKAKQRLKRLRNIHYLFNTALFLIAWRLLIARSQMARNVWFFIVSFCYKFLSYFRASSTLKV.

Residues 1-464 lie on the Cytoplasmic side of the membrane; the sequence is MSTIAAFYGG…KAKQRLKRLR (464 aa). The helical transmembrane segment at 465–484 threads the bilayer; it reads NIHYLFNTALFLIAWRLLIA. Residues 485-515 are Peroxisomal-facing; sequence RSQMARNVWFFIVSFCYKFLSYFRASSTLKV.

This sequence belongs to the fatty acyl-CoA reductase family.

It is found in the peroxisome membrane. It carries out the reaction a long-chain fatty acyl-CoA + 2 NADPH + 2 H(+) = a long-chain primary fatty alcohol + 2 NADP(+) + CoA. It catalyses the reaction a very long-chain fatty acyl-CoA + 2 NADPH + 2 H(+) = a very long-chain primary fatty alcohol + 2 NADP(+) + CoA. The enzyme catalyses an ultra-long-chain fatty acyl-CoA + 2 NADPH + 2 H(+) = an ultra long-chain primary fatty alcohol + 2 NADP(+) + CoA. The catalysed reaction is hexadecanoyl-CoA + 2 NADPH + 2 H(+) = hexadecan-1-ol + 2 NADP(+) + CoA. It carries out the reaction octadecanoyl-CoA + 2 NADPH + 2 H(+) = octadecan-1-ol + 2 NADP(+) + CoA. It catalyses the reaction eicosanoyl-CoA + 2 NADPH + 2 H(+) = eicosan-1-ol + 2 NADP(+) + CoA. The enzyme catalyses docosanoyl-CoA + 2 NADPH + 2 H(+) = docosan-1-ol + 2 NADP(+) + CoA. The catalysed reaction is tetracosanoyl-CoA + 2 NADPH + 2 H(+) = tetracosan-1-ol + 2 NADP(+) + CoA. It carries out the reaction hexacosanoyl-CoA + 2 NADPH + 2 H(+) = hexacosan-1-ol + 2 NADP(+) + CoA. It catalyses the reaction octacosanoyl-CoA + 2 NADPH + 2 H(+) = octacosan-1-ol + 2 NADP(+) + CoA. The enzyme catalyses triacontanoyl-CoA + 2 NADPH + 2 H(+) = triacontan-1-ol + 2 NADP(+) + CoA. The catalysed reaction is 18-methylnonadecanoyl-CoA + 2 NADPH + 2 H(+) = 18-methylnonadecan-1-ol + 2 NADP(+) + CoA. It carries out the reaction 20-methylheneicosanoyl-CoA + 2 NADPH + 2 H(+) = 20-methylheneicosan-1-ol + 2 NADP(+) + CoA. It catalyses the reaction 22-methyltricosanoyl-CoA + 2 NADPH + 2 H(+) = 22-methyltricosan-1-ol + 2 NADP(+) + CoA. The enzyme catalyses 24-methylpentacosanoyl-CoA + 2 NADPH + 2 H(+) = 24-methylpentacosan-1-ol + 2 NADP(+) + CoA. In terms of biological role, catalyzes the reduction of saturated but not unsaturated C16 or C18 fatty acyl-CoA to fatty alcohols (FAls). A lower activity can be observed with shorter fatty acyl-CoA substrates. Can produce very long-chain and ultra long-chain FAls, regardless of whether they have a straight or branched chain. Involved in the production of ether lipids/plasmalogens and wax monoesters whose synthesis requires FAls as substrates. The sequence is that of Fatty acyl-CoA reductase 2 from Homo sapiens (Human).